Reading from the N-terminus, the 361-residue chain is Phosphoserine aminotransferase (361 aa).

L-glutamate is bound at residue Arg-43. Pyridoxal 5'-phosphate contacts are provided by residues 77-78, Trp-103, Thr-152, Asp-172, and Gln-195; that span reads AS. An N6-(pyridoxal phosphate)lysine modification is found at Lys-196. 237-238 contacts pyridoxal 5'-phosphate; sequence NT.

The protein belongs to the class-V pyridoxal-phosphate-dependent aminotransferase family. SerC subfamily. As to quaternary structure, homodimer. The cofactor is pyridoxal 5'-phosphate.

Its subcellular location is the cytoplasm. It catalyses the reaction O-phospho-L-serine + 2-oxoglutarate = 3-phosphooxypyruvate + L-glutamate. It carries out the reaction 4-(phosphooxy)-L-threonine + 2-oxoglutarate = (R)-3-hydroxy-2-oxo-4-phosphooxybutanoate + L-glutamate. The protein operates within amino-acid biosynthesis; L-serine biosynthesis; L-serine from 3-phospho-D-glycerate: step 2/3. It functions in the pathway cofactor biosynthesis; pyridoxine 5'-phosphate biosynthesis; pyridoxine 5'-phosphate from D-erythrose 4-phosphate: step 3/5. Its function is as follows. Catalyzes the reversible conversion of 3-phosphohydroxypyruvate to phosphoserine and of 3-hydroxy-2-oxo-4-phosphonooxybutanoate to phosphohydroxythreonine. In Desulfosudis oleivorans (strain DSM 6200 / JCM 39069 / Hxd3) (Desulfococcus oleovorans), this protein is Phosphoserine aminotransferase.